A 325-amino-acid polypeptide reads, in one-letter code: tRNA dimethylallyltransferase (325 aa).

Residue 17–24 coordinates ATP; it reads GPTASGKT. Substrate is bound at residue 19–24; that stretch reads TASGKT. 4 interaction with substrate tRNA regions span residues 42-45, 166-170, 251-256, and 284-291; these read DSAL, QRIQR, RCVGYR, and KRQITWLR.

The protein belongs to the IPP transferase family. As to quaternary structure, monomer. Requires Mg(2+) as cofactor.

The enzyme catalyses adenosine(37) in tRNA + dimethylallyl diphosphate = N(6)-dimethylallyladenosine(37) in tRNA + diphosphate. In terms of biological role, catalyzes the transfer of a dimethylallyl group onto the adenine at position 37 in tRNAs that read codons beginning with uridine, leading to the formation of N6-(dimethylallyl)adenosine (i(6)A). The chain is tRNA dimethylallyltransferase from Burkholderia multivorans (strain ATCC 17616 / 249).